Consider the following 205-residue polypeptide: Glycerol-3-phosphate acyltransferase (205 aa).

5 consecutive transmembrane segments (helical) span residues 6–26, 55–75, 89–109, 120–140, and 162–182; these read STVL…AVVV, KAAI…VWLV, VALV…FRFV, ILLA…LVIA, and ALMF…VLLI.

The protein belongs to the PlsY family. In terms of assembly, probably interacts with PlsX.

It is found in the cell inner membrane. It carries out the reaction an acyl phosphate + sn-glycerol 3-phosphate = a 1-acyl-sn-glycero-3-phosphate + phosphate. The protein operates within lipid metabolism; phospholipid metabolism. Its function is as follows. Catalyzes the transfer of an acyl group from acyl-phosphate (acyl-PO(4)) to glycerol-3-phosphate (G3P) to form lysophosphatidic acid (LPA). This enzyme utilizes acyl-phosphate as fatty acyl donor, but not acyl-CoA or acyl-ACP. In Herminiimonas arsenicoxydans, this protein is Glycerol-3-phosphate acyltransferase.